We begin with the raw amino-acid sequence, 487 residues long: ATP-dependent rRNA helicase RRP3 (487 aa).

The interval 22-67 is disordered; the sequence is IKRKALEKQQQAHANEPSPSDEDSAQSNSKDSNSNEQPEESEEIFE. The Q motif motif lies at 67–95; the sequence is ESFTELDLVPELIEACKNLNYNKPTPIQS. The Helicase ATP-binding domain occupies 98-270; that stretch reads IPPALKGSDI…RASLTNPVKC (173 aa). 111–118 is an ATP binding site; sequence AQTGSGKT. A DEAD box motif is present at residues 217 to 220; it reads DEAD. A Helicase C-terminal domain is found at 298-442; the sequence is LIYLLNEFIG…ENVDKDAILA (145 aa). The interval 459 to 487 is disordered; it reads NRRNKEKQARGKGRRGRMATRDNMDREER. Residues 477 to 487 are compositionally biased toward basic and acidic residues; sequence ATRDNMDREER.

The protein belongs to the DEAD box helicase family. DDX47/RRP3 subfamily. In terms of assembly, interacts with the SSU processome.

The protein resides in the nucleus. The enzyme catalyses ATP + H2O = ADP + phosphate + H(+). In terms of biological role, ATP-dependent rRNA helicase required for pre-ribosomal RNA processing. Involved in the maturation of the 35S-pre-rRNA and to its cleavage to mature 18S rRNA. This chain is ATP-dependent rRNA helicase RRP3, found in Kluyveromyces lactis (strain ATCC 8585 / CBS 2359 / DSM 70799 / NBRC 1267 / NRRL Y-1140 / WM37) (Yeast).